The following is a 461-amino-acid chain: Transcriptional activator RocR (461 aa).

Residue D57 is modified to 4-aspartylphosphate. Residues 143–372 (ILGTSPAIQD…EHMIEGAMNF (230 aa)) enclose the Sigma-54 factor interaction domain. ATP is bound by residues 171–178 (GETGTGKE) and 233–242 (AHGGTLLLDE). A DNA-binding region (H-T-H motif) is located at residues 434-453 (ISKAAQELGISRQSLQYRLK).

Functionally, positive regulator of arginine catabolism. Controls the transcription of the two operons rocABC and rocDEF and probably acts by binding to the corresponding upstream activating sequences. The chain is Transcriptional activator RocR (rocR) from Bacillus subtilis (strain 168).